A 426-amino-acid chain; its full sequence is Histidine--tRNA ligase (426 aa).

Belongs to the class-II aminoacyl-tRNA synthetase family. Homodimer.

The protein resides in the cytoplasm. The enzyme catalyses tRNA(His) + L-histidine + ATP = L-histidyl-tRNA(His) + AMP + diphosphate + H(+). The sequence is that of Histidine--tRNA ligase from Prochlorococcus marinus (strain MIT 9312).